The chain runs to 194 residues: Phosphoheptose isomerase (194 aa).

The SIS domain occupies 37–194 (IADTFKAGGK…LIEKEMVAQG (158 aa)). 52–54 (NGG) is a substrate binding site. Zn(2+) is bound by residues H61 and E65. Substrate contacts are provided by residues E65, 93 to 94 (ND), 119 to 121 (STS), S124, and Q172. Q172 and H180 together coordinate Zn(2+).

Belongs to the SIS family. GmhA subfamily. As to quaternary structure, homotetramer. Zn(2+) is required as a cofactor.

It localises to the cytoplasm. The enzyme catalyses 2 D-sedoheptulose 7-phosphate = D-glycero-alpha-D-manno-heptose 7-phosphate + D-glycero-beta-D-manno-heptose 7-phosphate. It functions in the pathway carbohydrate biosynthesis; D-glycero-D-manno-heptose 7-phosphate biosynthesis; D-glycero-alpha-D-manno-heptose 7-phosphate and D-glycero-beta-D-manno-heptose 7-phosphate from sedoheptulose 7-phosphate: step 1/1. Catalyzes the isomerization of sedoheptulose 7-phosphate in D-glycero-D-manno-heptose 7-phosphate. This chain is Phosphoheptose isomerase, found in Sodalis glossinidius (strain morsitans).